A 102-amino-acid polypeptide reads, in one-letter code: Small ribosomal subunit protein uS10 (102 aa).

Belongs to the universal ribosomal protein uS10 family. As to quaternary structure, part of the 30S ribosomal subunit.

Its function is as follows. Involved in the binding of tRNA to the ribosomes. The polypeptide is Small ribosomal subunit protein uS10 (Streptococcus sanguinis (strain SK36)).